The chain runs to 629 residues: Dolichyl-diphosphooligosaccharide--protein glycosyltransferase subunit 2 (629 aa).

A signal peptide spans Met1–Ala22. Residues Leu23–Val541 lie on the Lumenal side of the membrane. A glycan (N-linked (GlcNAc...) asparagine) is linked at Asn106. Lys154 is covalently cross-linked (Glycyl lysine isopeptide (Lys-Gly) (interchain with G-Cter in ubiquitin)). A helical membrane pass occupies residues Val542 to Ile562. Topologically, residues Arg563–Asn570 are cytoplasmic. The chain crosses the membrane as a helical span at residues Phe571–Tyr591. Over Trp592–Gln594 the chain is Lumenal. A helical transmembrane segment spans residues Leu595–Gly615. Over Asn616–His629 the chain is Cytoplasmic.

Belongs to the SWP1 family. Component of the oligosaccharyltransferase (OST) complex. OST exists in two different complex forms which contain common core subunits RPN1, RPN2, OST48, OST4, DAD1 and TMEM258, either STT3A or STT3B as catalytic subunits, and form-specific accessory subunits. STT3A complex assembly occurs through the formation of 3 subcomplexes. Subcomplex 1 contains RPN1 and TMEM258, subcomplex 2 contains the STT3A-specific subunits STT3A, DC2/OSTC, and KCP2 as well as the core subunit OST4, and subcomplex 3 contains RPN2, DAD1, and OST48. The STT3A complex can form stable complexes with the Sec61 complex or with both the Sec61 and TRAP complexes. Interacts with DDI2. Interacts with TMEM35A/NACHO.

It localises to the endoplasmic reticulum. It is found in the endoplasmic reticulum membrane. It participates in protein modification; protein glycosylation. Its function is as follows. Subunit of the oligosaccharyl transferase (OST) complex that catalyzes the initial transfer of a defined glycan (Glc(3)Man(9)GlcNAc(2) in eukaryotes) from the lipid carrier dolichol-pyrophosphate to an asparagine residue within an Asn-X-Ser/Thr consensus motif in nascent polypeptide chains, the first step in protein N-glycosylation. N-glycosylation occurs cotranslationally and the complex associates with the Sec61 complex at the channel-forming translocon complex that mediates protein translocation across the endoplasmic reticulum (ER). All subunits are required for a maximal enzyme activity. This Sus scrofa (Pig) protein is Dolichyl-diphosphooligosaccharide--protein glycosyltransferase subunit 2.